The following is a 309-amino-acid chain: Ribosomal RNA small subunit methyltransferase H (309 aa).

Residues 44–46 (GGH), Asp62, Phe102, Asp118, and Gln125 each bind S-adenosyl-L-methionine. Residues 289-309 (LEQQRNSRARSAKLRVAARSS) are disordered.

This sequence belongs to the methyltransferase superfamily. RsmH family.

It is found in the cytoplasm. It carries out the reaction cytidine(1402) in 16S rRNA + S-adenosyl-L-methionine = N(4)-methylcytidine(1402) in 16S rRNA + S-adenosyl-L-homocysteine + H(+). Specifically methylates the N4 position of cytidine in position 1402 (C1402) of 16S rRNA. The sequence is that of Ribosomal RNA small subunit methyltransferase H from Synechococcus sp. (strain JA-3-3Ab) (Cyanobacteria bacterium Yellowstone A-Prime).